We begin with the raw amino-acid sequence, 22 residues long: Piscidin-3 (22 aa).

Residue Gly22 is modified to Glycine amide.

Belongs to the pleurocidin family. As to expression, mast cells in gill, skin and gut, and in lining blood vessels in the viscera.

The protein localises to the secreted. The protein resides in the membrane. Its function is as follows. Antimicrobial peptide with broad-spectrum activity against Gram-positive and Gram-negative bacteria. Rapidly inactivates both channel catfish herpesvirus (ED(50)=11 uM) and frog virus 3 (ED(50)=16 uM) over a wide temperature range. Has hemolytic activity. This Morone chrysops x Morone saxatilis (White bass x Striped bass) protein is Piscidin-3.